Here is a 239-residue protein sequence, read N- to C-terminus: Peptidyl-tRNA hydrolase (239 aa).

Tyr14 contacts tRNA. The Proton acceptor role is filled by His19. Residues Phe64, Asn66, and Asn112 each contribute to the tRNA site. The tract at residues 188-239 (APPRSSTSKPKAQDNREDAAQAAEERSETRTPPEARPEDTRSALQKLADKFR) is disordered. Residues 198 to 239 (KAQDNREDAAQAAEERSETRTPPEARPEDTRSALQKLADKFR) are compositionally biased toward basic and acidic residues.

Belongs to the PTH family. In terms of assembly, monomer.

It localises to the cytoplasm. It carries out the reaction an N-acyl-L-alpha-aminoacyl-tRNA + H2O = an N-acyl-L-amino acid + a tRNA + H(+). Functionally, hydrolyzes ribosome-free peptidyl-tRNAs (with 1 or more amino acids incorporated), which drop off the ribosome during protein synthesis, or as a result of ribosome stalling. In terms of biological role, catalyzes the release of premature peptidyl moieties from peptidyl-tRNA molecules trapped in stalled 50S ribosomal subunits, and thus maintains levels of free tRNAs and 50S ribosomes. The chain is Peptidyl-tRNA hydrolase from Jannaschia sp. (strain CCS1).